The sequence spans 679 residues: MAEQQQRAAELRSLLNRAAHAYYVLDAPVMEDTLYDRLYRELQQLEQADPSLLSADSPTQRVGKAPATGFHSVEHRIPLQSLDNAFDHGELKAWHERLLKVLDRADDSPLPLVGELKIDGNALALSYRHGVLERAATRGDGSSGEEITANVRTISSIPLRLQIDDPPEWVEVRGEAFIPDDTFAAINNERAAHGDALFANPRNACAGTLRQLDPKVVAARRLDFFAYTLHLPSDHSNSPECQWDVLAWLEQAGFRVNPNRELCDGLNGIERFCDRWEQQRHQLTYATDGVVVKLNDLRLQDEAGTTQKAPRWAIALKYPAEEAPSKLLKLAVQVGRTGAVTPVAEFEPVALAGTSVSRATLHNADRIAELDLHLGDTVVVRKAGEIIPEVVRVLPELRPTGAVPLELPDHCPECGSNLVRDDSEAATRCINSSCPAILRGGLRHWVSKGALDVDGLGNKLIQQLVERGLVRSIADLYRLDAALLASLERVGEKSAANLVAALEQSKQQPWHRQLYGLGIRHIGEVNAKALAAAYPNSASLAAAEPESIAALHGIGPEISSSLQQWHANPPNQRLLEDLRAVGLSLEANTSELNANSTGEGNSSGALLGKTLVLTGTLPNLSRSDAKTLIEGAGGKVSGSVSKKTDYLVAGEAAGSKLSKAESLGVEILTEAELQKLLST.

NAD(+)-binding positions include 32–36 (DTLYD), 81–82 (SL), and Glu-115. Lys-117 serves as the catalytic N6-AMP-lysine intermediate. Arg-138, Glu-175, Lys-293, and Lys-317 together coordinate NAD(+). The Zn(2+) site is built by Cys-411, Cys-414, Cys-429, and Cys-434. The 79-residue stretch at 601–679 (NSSGALLGKT…EAELQKLLST (79 aa)) folds into the BRCT domain.

It belongs to the NAD-dependent DNA ligase family. LigA subfamily. Mg(2+) serves as cofactor. The cofactor is Mn(2+).

The catalysed reaction is NAD(+) + (deoxyribonucleotide)n-3'-hydroxyl + 5'-phospho-(deoxyribonucleotide)m = (deoxyribonucleotide)n+m + AMP + beta-nicotinamide D-nucleotide.. Its function is as follows. DNA ligase that catalyzes the formation of phosphodiester linkages between 5'-phosphoryl and 3'-hydroxyl groups in double-stranded DNA using NAD as a coenzyme and as the energy source for the reaction. It is essential for DNA replication and repair of damaged DNA. This chain is DNA ligase, found in Parasynechococcus marenigrum (strain WH8102).